Reading from the N-terminus, the 466-residue chain is mRNA-capping enzyme subunit alpha (466 aa).

Lys-67 functions as the N6-GMP-lysine intermediate in the catalytic mechanism. Positions 408-466 are disordered; sequence REQGLKNAQKQFNHQASARSSLSQQHSTEPEQSQDQPKYVDDDDDNWSDDEPDTKRQKI. A compositionally biased stretch (polar residues) spans 413–443; sequence KNAQKQFNHQASARSSLSQQHSTEPEQSQDQ. Residues 448–459 show a composition bias toward acidic residues; sequence DDDDDNWSDDEP.

Belongs to the eukaryotic GTase family. As to quaternary structure, heterodimer. The mRNA-capping enzyme is composed of two separate chains alpha and beta, respectively a mRNA guanylyltransferase and an mRNA 5'-triphosphate monophosphatase.

It is found in the nucleus. It carries out the reaction a 5'-end diphospho-ribonucleoside in mRNA + GTP + H(+) = a 5'-end (5'-triphosphoguanosine)-ribonucleoside in mRNA + diphosphate. In terms of biological role, second step of mRNA capping. Transfer of the GMP moiety of GTP to the 5'-end of RNA via an enzyme-GMP covalent reaction intermediate. The protein is mRNA-capping enzyme subunit alpha (CEG1) of Kluyveromyces lactis (strain ATCC 8585 / CBS 2359 / DSM 70799 / NBRC 1267 / NRRL Y-1140 / WM37) (Yeast).